We begin with the raw amino-acid sequence, 635 residues long: 1-deoxy-D-xylulose-5-phosphate synthase (635 aa).

Thiamine diphosphate is bound by residues histidine 78 and 119 to 121 (GHA). Aspartate 151 provides a ligand contact to Mg(2+). Thiamine diphosphate contacts are provided by residues 152-153 (GA), asparagine 180, and tyrosine 291. Position 180 (asparagine 180) interacts with Mg(2+). The interval 305–325 (PAFEDRGGTPVTRGSDGRPPY) is disordered. Glutamate 374 serves as a coordination point for thiamine diphosphate.

Belongs to the transketolase family. DXPS subfamily. Homodimer. Requires Mg(2+) as cofactor. Thiamine diphosphate serves as cofactor.

The enzyme catalyses D-glyceraldehyde 3-phosphate + pyruvate + H(+) = 1-deoxy-D-xylulose 5-phosphate + CO2. It participates in metabolic intermediate biosynthesis; 1-deoxy-D-xylulose 5-phosphate biosynthesis; 1-deoxy-D-xylulose 5-phosphate from D-glyceraldehyde 3-phosphate and pyruvate: step 1/1. Catalyzes the acyloin condensation reaction between C atoms 2 and 3 of pyruvate and glyceraldehyde 3-phosphate to yield 1-deoxy-D-xylulose-5-phosphate (DXP). The polypeptide is 1-deoxy-D-xylulose-5-phosphate synthase (Rhodopirellula baltica (strain DSM 10527 / NCIMB 13988 / SH1)).